Consider the following 452-residue polypeptide: Chromosomal replication initiator protein DnaA (452 aa).

Residues 1 to 85 (MSTTAWQKCL…IEVGSKPVEA (85 aa)) are domain I, interacts with DnaA modulators. Positions 85–115 (AVDTPAETIVTSSSTAPLKSAPKKAVDYKSS) are domain II. Positions 116-332 (HLNKKFVFDS…GALRRVIANA (217 aa)) are domain III, AAA+ region. Positions 160, 162, 163, and 164 each coordinate ATP. Residues 333-452 (HFTGKPITIE…YKNLMRILSS (120 aa)) form a domain IV, binds dsDNA region.

Belongs to the DnaA family. In terms of assembly, oligomerizes as a right-handed, spiral filament on DNA at oriC.

Its subcellular location is the cytoplasm. Plays an essential role in the initiation and regulation of chromosomal replication. ATP-DnaA binds to the origin of replication (oriC) to initiate formation of the DNA replication initiation complex once per cell cycle. Binds the DnaA box (a 9 base pair repeat at the origin) and separates the double-stranded (ds)DNA. Forms a right-handed helical filament on oriC DNA; dsDNA binds to the exterior of the filament while single-stranded (ss)DNA is stabiized in the filament's interior. The ATP-DnaA-oriC complex binds and stabilizes one strand of the AT-rich DNA unwinding element (DUE), permitting loading of DNA polymerase. After initiation quickly degrades to an ADP-DnaA complex that is not apt for DNA replication. Binds acidic phospholipids. The polypeptide is Chromosomal replication initiator protein DnaA (Legionella pneumophila (strain Paris)).